Reading from the N-terminus, the 253-residue chain is Discoidin-1 subunit A (253 aa).

S2 carries the post-translational modification N-acetylserine. Residues 2 to 152 (STQGLVQLLA…ISLRCEFYTQ (151 aa)) form the F5/8 type C domain. The Cell attachment site signature appears at 79-81 (RGD).

In terms of assembly, tetramer of four different chains (A to D). In terms of tissue distribution, stalk cells.

The protein resides in the cytoplasm. Galactose- and N-acetylgalactosamine-binding lectin. May play a role in cell-substratum adhesion rather than in cell-cell adhesion. May be necessary for the maintenance of normal elongate morphology during aggregation. The protein is Discoidin-1 subunit A (dscA-1) of Dictyostelium discoideum (Social amoeba).